The chain runs to 732 residues: Ferric aerobactin receptor (732 aa).

The signal sequence occupies residues 1-25 (MMISKKYTLWALNPLLLTMMAPAVA). The short motif at 31–38 (ETFVVSAN) is the TonB box element. Residues 43-153 (TVAEMAQTTW…TGGLINIVTK (111 aa)) enclose the TBDR plug domain. Residues 158–732 (ETMMEFEAGT…TFGLNYSVLF (575 aa)) form the TBDR beta-barrel domain. The short motif at 715-732 (YDYKGRGRTFGLNYSVLF) is the TonB C-terminal box element.

This sequence belongs to the TonB-dependent receptor family.

The protein localises to the cell outer membrane. Its function is as follows. Receptor for cloacin DF13/aerobactin. The protein is Ferric aerobactin receptor (iutA) of Escherichia coli.